Consider the following 140-residue polypeptide: uncharacterized protein (140 aa).

2 consecutive transmembrane segments (helical) span residues 4–21 (ILKFGILGFGAIFGYLFG) and 26–48 (LVKVLVCFIVADYISGLLASGYL).

It belongs to the bacteriophage holin family. Cp-1 holin subfamily.

The protein localises to the cell membrane. This is an uncharacterized protein from Listeria monocytogenes serovar 1/2a (strain ATCC BAA-679 / EGD-e).